The following is a 540-amino-acid chain: Suppressor of tumorigenicity 7 protein-like (540 aa).

Transmembrane regions (helical) follow at residues 24-44, 68-88, 475-495, and 502-522; these read WSWT…VYVL, FYVA…IFEW, LPFF…LAML, and LMGV…GFFA.

The protein belongs to the ST7 family.

The protein localises to the membrane. The chain is Suppressor of tumorigenicity 7 protein-like (st7l) from Danio rerio (Zebrafish).